A 180-amino-acid polypeptide reads, in one-letter code: Putative methyltransferase YrhH (180 aa).

This sequence belongs to the methyltransferase superfamily.

The protein is Putative methyltransferase YrhH (yrhH) of Bacillus subtilis (strain 168).